Consider the following 164-residue polypeptide: Peptidyl-prolyl cis-trans isomerase A-like 4F (164 aa).

One can recognise a PPIase cyclophilin-type domain in the interval 7 to 163 (FFEITRDGKP…KKITIADCGQ (157 aa)).

It belongs to the cyclophilin-type PPIase family. PPIase A subfamily.

The protein resides in the cytoplasm. The catalysed reaction is [protein]-peptidylproline (omega=180) = [protein]-peptidylproline (omega=0). PPIases accelerate the folding of proteins. It catalyzes the cis-trans isomerization of proline imidic peptide bonds in oligopeptides. This Homo sapiens (Human) protein is Peptidyl-prolyl cis-trans isomerase A-like 4F.